Reading from the N-terminus, the 275-residue chain is Trans-aconitate 2-methyltransferase (275 aa).

The protein belongs to the methyltransferase superfamily. Tam family.

It is found in the cytoplasm. It carries out the reaction trans-aconitate + S-adenosyl-L-methionine = (E)-3-(methoxycarbonyl)pent-2-enedioate + S-adenosyl-L-homocysteine. In terms of biological role, catalyzes the S-adenosylmethionine monomethyl esterification of trans-aconitate. The polypeptide is Trans-aconitate 2-methyltransferase (Pseudomonas paraeruginosa (strain DSM 24068 / PA7) (Pseudomonas aeruginosa (strain PA7))).